Here is a 212-residue protein sequence, read N- to C-terminus: Pyridoxine/pyridoxamine 5'-phosphate oxidase (212 aa).

Residues 8 to 11 and lysine 66 each bind substrate; that span reads RREY. Residues 61–66, 76–77, arginine 82, lysine 83, and glutamine 105 each bind FMN; these read RIVLLK and FT. Residues tyrosine 123, arginine 127, and serine 131 each coordinate substrate. Residues 140–141 and tryptophan 185 each bind FMN; that span reads QS. 191–193 is a binding site for substrate; the sequence is RLH. FMN is bound at residue arginine 195.

This sequence belongs to the pyridoxamine 5'-phosphate oxidase family. Homodimer. Requires FMN as cofactor.

It carries out the reaction pyridoxamine 5'-phosphate + O2 + H2O = pyridoxal 5'-phosphate + H2O2 + NH4(+). The catalysed reaction is pyridoxine 5'-phosphate + O2 = pyridoxal 5'-phosphate + H2O2. The protein operates within cofactor metabolism; pyridoxal 5'-phosphate salvage; pyridoxal 5'-phosphate from pyridoxamine 5'-phosphate: step 1/1. It functions in the pathway cofactor metabolism; pyridoxal 5'-phosphate salvage; pyridoxal 5'-phosphate from pyridoxine 5'-phosphate: step 1/1. Functionally, catalyzes the oxidation of either pyridoxine 5'-phosphate (PNP) or pyridoxamine 5'-phosphate (PMP) into pyridoxal 5'-phosphate (PLP). The polypeptide is Pyridoxine/pyridoxamine 5'-phosphate oxidase (Shewanella denitrificans (strain OS217 / ATCC BAA-1090 / DSM 15013)).